Consider the following 453-residue polypeptide: Maltotriose-binding protein (453 aa).

An N-terminal signal peptide occupies residues 1-29 (MKRGIYAVLLVGVLIFSVVASGCIGGTQT). A compositionally biased stretch (low complexity) spans 27–65 (TQTQTETQTPEKTQTPTTTQPSPTTTTSPTQTTSQTPTE). The tract at residues 27–73 (TQTQTETQTPEKTQTPTTTQPSPTTTTSPTQTTSQTPTETETHTQEA) is disordered.

The protein belongs to the bacterial solute-binding protein 1 family.

Its function is as follows. Involved in an abc transport system for maltotriose. The polypeptide is Maltotriose-binding protein (malE) (Pyrococcus abyssi (strain GE5 / Orsay)).